The sequence spans 428 residues: GTPase Obg (428 aa).

The 158-residue stretch at 1–158 (MFVDQVQVEV…RFIKLELKVL (158 aa)) folds into the Obg domain. Residues 159-333 (ADVGLVGFPS…LMHKTAEVLK (175 aa)) form the OBG-type G domain. GTP is bound by residues 165 to 172 (GFPSVGKS), 190 to 194 (FTTLV), 212 to 215 (DLPG), 282 to 285 (TKMD), and 314 to 316 (SSL). Positions 172 and 192 each coordinate Mg(2+). Residues 350-428 (YKYQPEPALK…IDDFTFEFVE (79 aa)) form the OCT domain.

Belongs to the TRAFAC class OBG-HflX-like GTPase superfamily. OBG GTPase family. In terms of assembly, monomer. Mg(2+) serves as cofactor.

Its subcellular location is the cytoplasm. Functionally, an essential GTPase which binds GTP, GDP and possibly (p)ppGpp with moderate affinity, with high nucleotide exchange rates and a fairly low GTP hydrolysis rate. Plays a role in control of the cell cycle, stress response, ribosome biogenesis and in those bacteria that undergo differentiation, in morphogenesis control. The protein is GTPase Obg of Lacticaseibacillus casei (strain BL23) (Lactobacillus casei).